The sequence spans 406 residues: Corticosteroid-binding globulin (406 aa).

An N-terminal signal peptide occupies residues 1–22 (MPLLLYTCLLWLLSSGLWTVQA). N-linked (GlcNAc...) asparagine glycosylation is found at N31 and N96. A cortisol-binding site is contributed by Q255. An N-linked (GlcNAc...) asparagine glycan is attached at N261. Residue D287 coordinates cortisol. N-linked (GlcNAc...) asparagine glycans are attached at residues N331 and N360. W394 is a binding site for cortisol.

It belongs to the serpin family. As to expression, expressed by the liver; secreted in plasma.

It localises to the secreted. Its function is as follows. Major transport protein for glucocorticoids and progestins in the blood of almost all vertebrate species. The polypeptide is Corticosteroid-binding globulin (SERPINA6) (Saimiri sciureus (Common squirrel monkey)).